We begin with the raw amino-acid sequence, 260 residues long: Global transcriptional regulator CodY (260 aa).

The segment at 1 to 159 is GAF domain; the sequence is MPNLLEKTRK…SSTVVGIQLL (159 aa). The H-T-H motif DNA-binding region spans 207 to 226; sequence ASVIADRIGITRSVIVNALR.

This sequence belongs to the CodY family.

It localises to the cytoplasm. Its function is as follows. DNA-binding global transcriptional regulator which is involved in the adaptive response to starvation and acts by directly or indirectly controlling the expression of numerous genes in response to nutrient availability. During rapid exponential growth, CodY is highly active and represses genes whose products allow adaptation to nutrient depletion. This chain is Global transcriptional regulator CodY, found in Streptococcus equi subsp. equi (strain 4047).